A 433-amino-acid chain; its full sequence is MDIRKPMFHSRVHIEAGDIVILYMARDNMTAITITPGETFHNKYGRYPHDMLIGQKYGSKIHSPPPHPGYVHVLRPTPELWTLSLPHRTQILYLPDISYITMRLGVRVGGKVIEAGTGSGSMTHSLSRSVGPSGQVMSFEYHRQRFETALKEFESHGLTNVRLQHRNVCKEGFGDAQGVEGVFLDLPAPWEAIPHAVKALRRDIITRICCFSPCLEQVLKTVTCLRSEGFSDISTQEVLIRTHELVTPPPNTTYLSSISSVVSYLREHEQRKEERRLLQIKTAKENNRKVKGIEADDAIPVEGETGSKRKLEQPSVTGSDNAAPANSRPKTNLLWTEPPNTLPSTVLTKPSPEMKGHTSYLTFAILYPESVRLSMVAQETSSRVETPTNITKAPETHSQETHYSEGSEIEKIGAMTSKEMDDWMKSGSTSLSI.

Residues Leu92, 119–121 (SGS), Glu140, Arg145, 167–168 (NV), and Asp185 contribute to the S-adenosyl-L-methionine site. Disordered regions lie at residues 295 to 353 (ADDA…PSPE) and 380 to 409 (TSSRVETPTNITKAPETHSQETHYSEGSEI). Composition is skewed to polar residues over residues 328-348 (RPKTNLLWTEPPNTLPSTVLT) and 380-391 (TSSRVETPTNIT). Positions 394–409 (PETHSQETHYSEGSEI) are enriched in basic and acidic residues.

The protein belongs to the class I-like SAM-binding methyltransferase superfamily. TRM61 family. In terms of assembly, heterotetramer; composed of two copies of TRM6 and two copies of TRM61.

It is found in the nucleus. It carries out the reaction adenosine(58) in tRNA + S-adenosyl-L-methionine = N(1)-methyladenosine(58) in tRNA + S-adenosyl-L-homocysteine + H(+). In terms of biological role, catalytic subunit of tRNA (adenine-N(1)-)-methyltransferase, which catalyzes the formation of N(1)-methyladenine at position 58 (m1A58) in initiator methionyl-tRNA. The sequence is that of tRNA (adenine(58)-N(1))-methyltransferase catalytic subunit TRM61 (TRM61) from Cryptococcus neoformans var. neoformans serotype D (strain B-3501A) (Filobasidiella neoformans).